A 244-amino-acid polypeptide reads, in one-letter code: Aspartate/glutamate leucyltransferase (244 aa).

Belongs to the R-transferase family. Bpt subfamily.

The protein localises to the cytoplasm. It catalyses the reaction N-terminal L-glutamyl-[protein] + L-leucyl-tRNA(Leu) = N-terminal L-leucyl-L-glutamyl-[protein] + tRNA(Leu) + H(+). The enzyme catalyses N-terminal L-aspartyl-[protein] + L-leucyl-tRNA(Leu) = N-terminal L-leucyl-L-aspartyl-[protein] + tRNA(Leu) + H(+). Functions in the N-end rule pathway of protein degradation where it conjugates Leu from its aminoacyl-tRNA to the N-termini of proteins containing an N-terminal aspartate or glutamate. This Bordetella bronchiseptica (strain ATCC BAA-588 / NCTC 13252 / RB50) (Alcaligenes bronchisepticus) protein is Aspartate/glutamate leucyltransferase.